Reading from the N-terminus, the 472-residue chain is DNA-cytosine methyltransferase (472 aa).

The SAM-dependent MTase C5-type domain maps to 87–457 (FRFIDLFAGI…KLLEPKIKQA (371 aa)). Residue C177 is part of the active site.

The protein belongs to the class I-like SAM-binding methyltransferase superfamily. C5-methyltransferase family.

The catalysed reaction is a 2'-deoxycytidine in DNA + S-adenosyl-L-methionine = a 5-methyl-2'-deoxycytidine in DNA + S-adenosyl-L-homocysteine + H(+). This methylase recognizes the double-stranded sequence 5'-CCWGG-3', methylates C-2 on both strands. This Escherichia coli O157:H7 protein is DNA-cytosine methyltransferase (dcm).